Reading from the N-terminus, the 42-residue chain is CAKKREWCAKTEDCCCPMKCIYAWYNEQSSCQTTFSGMFKKC.

Intrachain disulfides connect Cys-1/Cys-15, Cys-8/Cys-20, Cys-14/Cys-31, and Cys-16/Cys-42.

This sequence belongs to the neurotoxin 06 (delta-actx) family. Expressed by the venom gland.

The protein localises to the secreted. Its function is as follows. Neurotoxin that slows the inactivation of vertebrate tetrodotoxin-sensitive voltage-gated sodium channels (Nav) and most likely insect sodium channels presumably by binding to site 3 of the channel. Effects are an increase in resting tension, a muscle fasciculation and a decrease in indirect twitch tension. It fails to affect tetrodotoxin-resistant sodium currents. In vivo, is lethal to both vertebrates and insects. This is Delta-actinopoditoxin-Mb1a from Missulena bradleyi (Eastern mouse spider).